Consider the following 481-residue polypeptide: Small ribosomal subunit protein bS1 (481 aa).

4 S1 motif domains span residues 36-105 (GDIV…LSKK), 123-188 (DEAV…LSRR), 209-277 (GAIR…LSLK), and 294-363 (GQIV…LSLK). The disordered stretch occupies residues 437 to 465 (ATEEAGHGSSEQPPASSTPSAKATGGSLA). Positions 445–457 (SSEQPPASSTPSA) are enriched in polar residues.

It belongs to the bacterial ribosomal protein bS1 family.

Binds mRNA; thus facilitating recognition of the initiation point. It is needed to translate mRNA with a short Shine-Dalgarno (SD) purine-rich sequence. The sequence is that of Small ribosomal subunit protein bS1 (rpsA) from Mycobacterium leprae (strain TN).